A 1314-amino-acid chain; its full sequence is E3 ubiquitin-protein ligase RNF123 (1314 aa).

Alanine 2 bears the N-acetylalanine mark. The B30.2/SPRY domain occupies 74–254 (VDSEDNESQG…VAFNFGSRPL (181 aa)). Positions 460 to 483 (HRSSRESRDGKEAREETTEERQRR) are disordered. Residues 462 to 483 (SSRESRDGKEAREETTEERQRR) show a composition bias toward basic and acidic residues. Serine 675 is modified (phosphoserine). The residue at position 683 (arginine 683) is an Asymmetric dimethylarginine. The interval 968–974 (WILVRLW) is interaction with NFKB1. Residues cysteine 1254, cysteine 1257, cysteine 1269, histidine 1271, cysteine 1274, cysteine 1277, cysteine 1288, and cysteine 1291 each coordinate Zn(2+). The RING-type zinc-finger motif lies at 1254 to 1292 (CPICYAHPISAVFQPCGHKSCKACINQHLMNNKDCFFCK).

In terms of assembly, component of the KPC complex composed of RNF123/KPC1 and UBAC1/KPC2. Interacts with UBAC1 and CDKN1B via its N-terminal domain. Interacts with RIGI (via N-terminus) and IFIH1 (via N-terminus). In terms of processing, ubiquitinated, leading to its degradation. Deubiquitinated by USP19, thereby stimulating CDKN1B ubiquitin-dependent degradation.

The protein resides in the cytoplasm. The enzyme catalyses S-ubiquitinyl-[E2 ubiquitin-conjugating enzyme]-L-cysteine + [acceptor protein]-L-lysine = [E2 ubiquitin-conjugating enzyme]-L-cysteine + N(6)-ubiquitinyl-[acceptor protein]-L-lysine.. The protein operates within protein modification; protein ubiquitination. Catalytic subunit of the KPC complex that acts as E3 ubiquitin-protein ligase. Promotes the ubiquitination and proteasome-mediated degradation of CDKN1B which is the cyclin-dependent kinase inhibitor at the G0-G1 transition of the cell cycle. Also acts as a key regulator of the NF-kappa-B signaling by promoting maturation of the NFKB1 component of NF-kappa-B: acts by catalyzing ubiquitination of the NFKB1 p105 precursor, leading to limited proteasomal degradation of NFKB1 p105 and generation of the active NFKB1 p50 subunit. Functions also as an inhibitor of innate antiviral signaling mediated by RIGI and IFIH1 independently of its E3 ligase activity. Interacts with the N-terminal CARD domains of RIGI and IFIH1 and competes with the downstream adapter MAVS. In Mus musculus (Mouse), this protein is E3 ubiquitin-protein ligase RNF123 (Rnf123).